The primary structure comprises 367 residues: Glutamate 5-kinase 2 (367 aa).

K10 is a binding site for ATP. The substrate site is built by S50, D136, and N148. Residues 168–169 and 210–216 each bind ATP; these read TD and TGGMATK. The region spanning 275 to 353 is the PUA domain; it reads SGQIVIDAGA…KQIGELLDYD (79 aa).

This sequence belongs to the glutamate 5-kinase family.

The protein localises to the cytoplasm. The enzyme catalyses L-glutamate + ATP = L-glutamyl 5-phosphate + ADP. It functions in the pathway amino-acid biosynthesis; L-proline biosynthesis; L-glutamate 5-semialdehyde from L-glutamate: step 1/2. Its function is as follows. Catalyzes the transfer of a phosphate group to glutamate to form L-glutamate 5-phosphate. The protein is Glutamate 5-kinase 2 of Pseudoalteromonas translucida (strain TAC 125).